A 331-amino-acid chain; its full sequence is L-lactate dehydrogenase A chain (331 aa).

NAD(+) is bound by residues 29–57 and Arg98; that span reads GMVGMASAISILLKDLCDELAMVDVMEDK. Residues Arg105, Asn137, and Arg168 each coordinate substrate. Residue Asn137 participates in NAD(+) binding. His192 (proton acceptor) is an active-site residue. Thr247 is a binding site for substrate.

Belongs to the LDH/MDH superfamily. LDH family. As to quaternary structure, homotetramer.

The protein localises to the cytoplasm. It carries out the reaction (S)-lactate + NAD(+) = pyruvate + NADH + H(+). It functions in the pathway fermentation; pyruvate fermentation to lactate; (S)-lactate from pyruvate: step 1/1. Interconverts simultaneously and stereospecifically pyruvate and lactate with concomitant interconversion of NADH and NAD(+). The protein is L-lactate dehydrogenase A chain (ldha) of Paranotothenia magellanica (Maori cod).